Consider the following 155-residue polypeptide: Deoxyuridine 5'-triphosphate nucleotidohydrolase (155 aa).

Residues 71 to 73 (RSG), Asn-84, 88 to 90 (TID), and Lys-98 contribute to the substrate site.

Belongs to the dUTPase family. Mg(2+) serves as cofactor.

It catalyses the reaction dUTP + H2O = dUMP + diphosphate + H(+). It functions in the pathway pyrimidine metabolism; dUMP biosynthesis; dUMP from dCTP (dUTP route): step 2/2. Functionally, this enzyme is involved in nucleotide metabolism: it produces dUMP, the immediate precursor of thymidine nucleotides and it decreases the intracellular concentration of dUTP so that uracil cannot be incorporated into DNA. This Corynebacterium jeikeium (strain K411) protein is Deoxyuridine 5'-triphosphate nucleotidohydrolase.